Here is a 207-residue protein sequence, read N- to C-terminus: Proteasome subunit beta (207 aa).

Residues 1–9 (MSNKNTFEG) constitute a propeptide, removed in mature form; by autocatalysis. T10 (nucleophile) is an active-site residue.

This sequence belongs to the peptidase T1B family. In terms of assembly, the 20S proteasome core is composed of 14 alpha and 14 beta subunits that assemble into four stacked heptameric rings, resulting in a barrel-shaped structure. The two inner rings, each composed of seven catalytic beta subunits, are sandwiched by two outer rings, each composed of seven alpha subunits. The catalytic chamber with the active sites is on the inside of the barrel. Has a gated structure, the ends of the cylinder being occluded by the N-termini of the alpha-subunits. Is capped at one or both ends by the proteasome regulatory ATPase, PAN.

The protein localises to the cytoplasm. It carries out the reaction Cleavage of peptide bonds with very broad specificity.. Its activity is regulated as follows. The formation of the proteasomal ATPase PAN-20S proteasome complex, via the docking of the C-termini of PAN into the intersubunit pockets in the alpha-rings, triggers opening of the gate for substrate entry. Interconversion between the open-gate and close-gate conformations leads to a dynamic regulation of the 20S proteasome proteolysis activity. Component of the proteasome core, a large protease complex with broad specificity involved in protein degradation. This Methanobrevibacter ruminantium (strain ATCC 35063 / DSM 1093 / JCM 13430 / OCM 146 / M1) (Methanobacterium ruminantium) protein is Proteasome subunit beta.